The primary structure comprises 243 residues: MDGFDVSQAPPEYRSVEPIANLFVLGMGLGWLINYVGMIYQSFKDETYGMAIMPLCCNIAWEIVYSLIYPSKSLTEQGVFIAGLTINIGVMYAAIKFAPKEWSHAPLVMRNLSLIFFLATLGFLTGHLALAAEIGHSLAYSWGAVVCQLLLSVGGLCQLLCRGCTRGASYTLWLSRFLGSSCTVGFASLRWMYWPESFSWLNSPLVLWSLALFLTVDGSYGICYWYVRQYELSLKEAEGRKSK.

The next 3 helical transmembrane spans lie at 19 to 39 (IANLFVLGMGLGWLINYVGMI), 48 to 68 (YGMAIMPLCCNIAWEIVYSLI), and 78 to 98 (GVFIAGLTINIGVMYAAIKFA). N-linked (GlcNAc...) asparagine glycosylation occurs at Asn-111. Helical transmembrane passes span 112 to 132 (LSLIFFLATLGFLTGHLALAA), 137 to 157 (SLAYSWGAVVCQLLLSVGGLC), 172 to 194 (LWLSRFLGSSCTVGFASLRWMYW), and 205 to 225 (LVLWSLALFLTVDGSYGICYW).

The protein belongs to the paxB family.

It is found in the membrane. The protein operates within secondary metabolite biosynthesis. Terpene cyclase; part of the gene cluster that mediates the biosynthesis of the indole diterpenes penitrems. The geranylgeranyl diphosphate (GGPP) synthase ptmG catalyzes the first step in penitrem biosynthesis via conversion of farnesyl pyrophosphate and isopentyl pyrophosphate into geranylgeranyl pyrophosphate (GGPP). Condensation of indole-3-glycerol phosphate with GGPP by the prenyl transferase ptmC then forms 3-geranylgeranylindole (3-GGI). Epoxidation by the FAD-dependent monooxygenase ptmM leads to a epoxidized-GGI that is substrate of the terpene cyclase ptmB for cyclization to yield paspaline. Paspaline is subsequently converted to 13-desoxypaxilline by the cytochrome P450 monooxygenase ptmP, the latter being then converted to paxilline by the cytochrome P450 monooxygenase ptmQ. Paxilline is converted to beta-paxitriol via C-10 ketoreduction by the short-chain dehydrogenase ptmH which can be monoprenylated at the C-20 by the indole diterpene prenyltransferase ptmD. A two-step elimination (acetylation and elimination) process performed by the O-acetyltransferase ptmV and ptmI leads to the production of the prenylated form of penijanthine. The FAD-linked oxidoreductase ptmO then converts the prenylated form of penijanthine into PC-M5 which is in turn transformed into PC-M4 by the aromatic dimethylallyltransferase ptmE. Five sequential oxidative transformations performed by the cytochrome P450 monooxygenases ptmK, ptmU, ptmL, ptmN and ptmJ yield the various penitrem compounds. PtmK, ptmU and ptmM are involved in the formation of the key bicyclic ring of penitrem C via the formation of the intermediates secopenitrem D and penitrem D. PtmL catalyzes the epoxidation of penitrem D and C to yield penitrem B and F, respectively. PtmJ catalyzes the last benzylic hydroxylation to convert penitrem B to prenitrem E and penitrem F to penitrem A. The polypeptide is Terpene cyclase ptmB (Penicillium ochrochloron).